The chain runs to 174 residues: Large ribosomal subunit protein uL10 (174 aa).

The protein belongs to the universal ribosomal protein uL10 family. As to quaternary structure, part of the ribosomal stalk of the 50S ribosomal subunit. The N-terminus interacts with L11 and the large rRNA to form the base of the stalk. The C-terminus forms an elongated spine to which L12 dimers bind in a sequential fashion forming a multimeric L10(L12)X complex.

In terms of biological role, forms part of the ribosomal stalk, playing a central role in the interaction of the ribosome with GTP-bound translation factors. The protein is Large ribosomal subunit protein uL10 of Methylibium petroleiphilum (strain ATCC BAA-1232 / LMG 22953 / PM1).